The primary structure comprises 116 residues: Large ribosomal subunit protein bL17 (116 aa).

Belongs to the bacterial ribosomal protein bL17 family. In terms of assembly, part of the 50S ribosomal subunit. Contacts protein L32.

The protein is Large ribosomal subunit protein bL17 of Prochlorococcus marinus (strain MIT 9215).